The sequence spans 124 residues: Putative iron-sulfur cluster insertion protein ErpA 2 (124 aa).

Iron-sulfur cluster-binding residues include cysteine 52, cysteine 116, and cysteine 118.

This sequence belongs to the HesB/IscA family. As to quaternary structure, homodimer. Iron-sulfur cluster serves as cofactor.

Functionally, required for insertion of 4Fe-4S clusters. In Burkholderia vietnamiensis (strain G4 / LMG 22486) (Burkholderia cepacia (strain R1808)), this protein is Putative iron-sulfur cluster insertion protein ErpA 2.